Consider the following 472-residue polypeptide: Adenosylhomocysteinase (472 aa).

Residues Thr-64, Asp-138, and Glu-198 each contribute to the substrate site. Position 199–201 (Thr-199–Thr-201) interacts with NAD(+). Lys-228 and Asp-232 together coordinate substrate. Residues Asn-233, Gly-262–Gly-267, Glu-285, Asn-320, Ile-341–His-343, and Asn-386 contribute to the NAD(+) site.

It belongs to the adenosylhomocysteinase family. The cofactor is NAD(+).

Its subcellular location is the cytoplasm. It carries out the reaction S-adenosyl-L-homocysteine + H2O = L-homocysteine + adenosine. It participates in amino-acid biosynthesis; L-homocysteine biosynthesis; L-homocysteine from S-adenosyl-L-homocysteine: step 1/1. In terms of biological role, may play a key role in the regulation of the intracellular concentration of adenosylhomocysteine. The polypeptide is Adenosylhomocysteinase (Prochlorococcus marinus (strain MIT 9312)).